Reading from the N-terminus, the 159-residue chain is Ribosomal RNA large subunit methyltransferase H (159 aa).

S-adenosyl-L-methionine contacts are provided by residues Leu76, Gly108, and 127-132 (FGRLTL).

This sequence belongs to the RNA methyltransferase RlmH family. As to quaternary structure, homodimer.

Its subcellular location is the cytoplasm. It catalyses the reaction pseudouridine(1915) in 23S rRNA + S-adenosyl-L-methionine = N(3)-methylpseudouridine(1915) in 23S rRNA + S-adenosyl-L-homocysteine + H(+). Specifically methylates the pseudouridine at position 1915 (m3Psi1915) in 23S rRNA. The chain is Ribosomal RNA large subunit methyltransferase H from Listeria monocytogenes serotype 4a (strain HCC23).